A 390-amino-acid chain; its full sequence is Phosphopentomutase (390 aa).

6 residues coordinate Mn(2+): Asp14, Asp286, His291, Asp327, His328, and His339.

It belongs to the phosphopentomutase family. Requires Mn(2+) as cofactor.

The protein localises to the cytoplasm. It catalyses the reaction 2-deoxy-alpha-D-ribose 1-phosphate = 2-deoxy-D-ribose 5-phosphate. The enzyme catalyses alpha-D-ribose 1-phosphate = D-ribose 5-phosphate. Its pathway is carbohydrate degradation; 2-deoxy-D-ribose 1-phosphate degradation; D-glyceraldehyde 3-phosphate and acetaldehyde from 2-deoxy-alpha-D-ribose 1-phosphate: step 1/2. Its function is as follows. Isomerase that catalyzes the conversion of deoxy-ribose 1-phosphate (dRib-1-P) and ribose 1-phosphate (Rib-1-P) to deoxy-ribose 5-phosphate (dRib-5-P) and ribose 5-phosphate (Rib-5-P), respectively. The polypeptide is Phosphopentomutase (Exiguobacterium sibiricum (strain DSM 17290 / CCUG 55495 / CIP 109462 / JCM 13490 / 255-15)).